The sequence spans 563 residues: Phosphomethylpyrimidine synthase (563 aa).

Substrate-binding positions include N180, M209, Y238, H274, 294-296 (SRG), 335-338 (DGLR), and E374. Zn(2+) is bound at residue H378. Y401 contributes to the substrate binding site. H442 contributes to the Zn(2+) binding site. The [4Fe-4S] cluster site is built by C522, C525, and C530.

This sequence belongs to the ThiC family. It depends on [4Fe-4S] cluster as a cofactor.

The enzyme catalyses 5-amino-1-(5-phospho-beta-D-ribosyl)imidazole + S-adenosyl-L-methionine = 4-amino-2-methyl-5-(phosphooxymethyl)pyrimidine + CO + 5'-deoxyadenosine + formate + L-methionine + 3 H(+). It functions in the pathway cofactor biosynthesis; thiamine diphosphate biosynthesis. Its function is as follows. Catalyzes the synthesis of the hydroxymethylpyrimidine phosphate (HMP-P) moiety of thiamine from aminoimidazole ribotide (AIR) in a radical S-adenosyl-L-methionine (SAM)-dependent reaction. The chain is Phosphomethylpyrimidine synthase from Geobacillus thermodenitrificans (strain NG80-2).